Consider the following 1087-residue polypeptide: Error-prone DNA polymerase 3 (1087 aa).

Residues 1040 to 1064 (AGRGDEFAHGSPGSSDTRDKSKPVV) are disordered.

The protein belongs to the DNA polymerase type-C family. DnaE2 subfamily.

The protein resides in the cytoplasm. It carries out the reaction DNA(n) + a 2'-deoxyribonucleoside 5'-triphosphate = DNA(n+1) + diphosphate. Functionally, DNA polymerase involved in damage-induced mutagenesis and translesion synthesis (TLS). It is not the major replicative DNA polymerase. The sequence is that of Error-prone DNA polymerase 3 from Agrobacterium fabrum (strain C58 / ATCC 33970) (Agrobacterium tumefaciens (strain C58)).